The following is a 417-amino-acid chain: NADH-quinone oxidoreductase subunit D (417 aa).

Belongs to the complex I 49 kDa subunit family. As to quaternary structure, NDH-1 is composed of 14 different subunits. Subunits NuoB, C, D, E, F, and G constitute the peripheral sector of the complex.

It localises to the cell inner membrane. It carries out the reaction a quinone + NADH + 5 H(+)(in) = a quinol + NAD(+) + 4 H(+)(out). Functionally, NDH-1 shuttles electrons from NADH, via FMN and iron-sulfur (Fe-S) centers, to quinones in the respiratory chain. The immediate electron acceptor for the enzyme in this species is believed to be ubiquinone. Couples the redox reaction to proton translocation (for every two electrons transferred, four hydrogen ions are translocated across the cytoplasmic membrane), and thus conserves the redox energy in a proton gradient. This Cupriavidus taiwanensis (strain DSM 17343 / BCRC 17206 / CCUG 44338 / CIP 107171 / LMG 19424 / R1) (Ralstonia taiwanensis (strain LMG 19424)) protein is NADH-quinone oxidoreductase subunit D.